We begin with the raw amino-acid sequence, 209 residues long: Chaperone protein TorD (209 aa).

This sequence belongs to the TorD/DmsD family. TorD subfamily.

Its subcellular location is the cytoplasm. Functionally, involved in the biogenesis of TorA. Acts on TorA before the insertion of the molybdenum cofactor and, as a result, probably favors a conformation of the apoenzyme that is competent for acquiring the cofactor. The polypeptide is Chaperone protein TorD (Salmonella bongori (strain ATCC 43975 / DSM 13772 / NCTC 12419)).